We begin with the raw amino-acid sequence, 134 residues long: UPF0357 protein YCL012C (134 aa).

A signal peptide spans 1–23; that stretch reads MKSLFYLKLLLWVVLLSLCLLMA. 2 positions are modified to phosphoserine: S71 and S74. Residue K86 forms a Glycyl lysine isopeptide (Lys-Gly) (interchain with G-Cter in ubiquitin) linkage.

It belongs to the UPF0357 family.

This chain is UPF0357 protein YCL012C, found in Saccharomyces cerevisiae (strain ATCC 204508 / S288c) (Baker's yeast).